Reading from the N-terminus, the 291-residue chain is Glutathione S-transferase 2 (291 aa).

The region spanning 2–83 is the GST N-terminal domain; that stretch reads SPVKVFGHPM…YILRKYGGTA (82 aa). Residues 41 to 42, 54 to 55, and 67 to 68 contribute to the glutathione site; these read HK, KM, and KS. The GST C-terminal domain maps to 93-223; the sequence is GIEELAMVDV…RVCKHMPTEF (131 aa).

The protein belongs to the GST superfamily. Phi family.

The catalysed reaction is RX + glutathione = an S-substituted glutathione + a halide anion + H(+). Functionally, conjugation of reduced glutathione to a wide number of exogenous and endogenous hydrophobic electrophiles. The sequence is that of Glutathione S-transferase 2 (GSTA2) from Triticum aestivum (Wheat).